A 299-amino-acid polypeptide reads, in one-letter code: MKIQCNVCEAAEATVLCCADEAALCWACDEKIHAANKLAGKHQRVPLSASASSIPKCDICQEASGFFFCLQDRALLCRKCDVAIHTVNPHVSAHQRFLLTGIKVGLESIDTGPSTKSSPTNDDKTMETKPFVQSIPEPQKMAFDHHHHQQQQEQQEGVIPGTKVNDQTSTKLPLVSSGSTTGSIPQWQIEEIFGLTDFDQSYEYMENNGSSKADTSRRGDSDSSSMMRSAEEDGEDNNNCLGGETSWAVPQIQSPPTASGLNWPKHFHHHSVFVPDITSSTPYTGSSPNQRVGKRRRRF.

Positions 5, 8, 28, 33, 57, 60, 80, and 85 each coordinate Zn(2+). The B box-type 1; atypical zinc-finger motif lies at 5-47; the sequence is CNVCEAAEATVLCCADEAALCWACDEKIHAANKLAGKHQRVPL. A B box-type 2; atypical zinc finger spans residues 57–99; it reads CDICQEASGFFFCLQDRALLCRKCDVAIHTVNPHVSAHQRFLL. Disordered stretches follow at residues 143–181 and 206–299; these read FDHH…GSTT and ENNG…RRRF. Composition is skewed to polar residues over residues 164–181, 251–260, and 277–290; these read VNDQ…GSTT, QIQSPPTASG, and ITSS…SPNQ.

In terms of assembly, interacts with HY5. In terms of processing, ubiquitinated by COP1 in vitro. COP1-mediated degradation of BBX22 by the proteasome occurs in the dark and is important for a precise skotomorphogenesis process and optimization of seedling growth under short days conditions.

The protein localises to the nucleus. Acts as a positive regulator of seedling photomorphogenesis and light-regulated inhibition of hypocotyl elongation, independently and in concert with HY5 and BBX21. Acts as a positive regulator of de-etiolation and influences chloroplast biogenesis and function through regulation of genes encoding chloroplast proteins. Acts downstream of COP1 and plays an important role in early and long-term adjustment of the shade avoidance syndrome (SAS) responses in natural environments. Regulates the expression of genes responsive to light hormone signals which may contribute to optimal seedling development. This is B-box zinc finger protein 22 from Arabidopsis thaliana (Mouse-ear cress).